The following is a 302-amino-acid chain: Recombination-associated protein RdgC (302 aa).

The protein belongs to the RdgC family.

It is found in the cytoplasm. It localises to the nucleoid. In terms of biological role, may be involved in recombination. This is Recombination-associated protein RdgC from Psychromonas ingrahamii (strain DSM 17664 / CCUG 51855 / 37).